A 427-amino-acid chain; its full sequence is Tyrosine--tRNA ligase (427 aa).

Position 39 (Y39) interacts with L-tyrosine. The 'HIGH' region signature appears at 44–53 (PTSDSLHIGH). Positions 178 and 182 each coordinate L-tyrosine. The 'KMSKS' region motif lies at 238 to 242 (KFGKT). K241 lines the ATP pocket. Positions 360–417 (ITLQQALVESKLVVSRAQARELISSNSITVNSKKQLKTEYIFCATDRLYNRFTLLRRG) constitute an S4 RNA-binding domain.

This sequence belongs to the class-I aminoacyl-tRNA synthetase family. TyrS type 1 subfamily. As to quaternary structure, homodimer.

The protein resides in the cytoplasm. It carries out the reaction tRNA(Tyr) + L-tyrosine + ATP = L-tyrosyl-tRNA(Tyr) + AMP + diphosphate + H(+). Catalyzes the attachment of tyrosine to tRNA(Tyr) in a two-step reaction: tyrosine is first activated by ATP to form Tyr-AMP and then transferred to the acceptor end of tRNA(Tyr). This Blochmanniella pennsylvanica (strain BPEN) protein is Tyrosine--tRNA ligase.